The chain runs to 76 residues: Defensin-like protein 122 (76 aa).

The signal sequence occupies residues 1 to 25; it reads MSKTTVIAIFMVVLVLGLVTKETQG. 4 disulfide bridges follow: Cys29–Cys74, Cys39–Cys60, Cys44–Cys68, and Cys48–Cys70.

The protein belongs to the DEFL family. Expressed in flower buds, but not in stems, roots or rosette leaves.

It is found in the secreted. The protein is Defensin-like protein 122 (LCR30) of Arabidopsis thaliana (Mouse-ear cress).